The primary structure comprises 904 residues: Conserved oligomeric Golgi complex subunit 2 (904 aa).

Disordered stretches follow at residues 384 to 424 and 644 to 669; these read KEKQ…INNN and IKIT…LNNK. 2 stretches are compositionally biased toward low complexity: residues 388-424 and 652-663; these read SNNN…INNN and PSLSNQSPISSS.

The protein belongs to the COG2 family. As to quaternary structure, component of the conserved oligomeric Golgi complex which is composed of eight different subunits and is required for normal Golgi morphology and localization.

It localises to the golgi apparatus membrane. Its function is as follows. Required for normal Golgi function. This Dictyostelium discoideum (Social amoeba) protein is Conserved oligomeric Golgi complex subunit 2 (cog2).